Consider the following 249-residue polypeptide: Type III pantothenate kinase (249 aa).

Residue 6-13 (DCGNSFIK) participates in ATP binding. Substrate-binding positions include Tyr93 and 100 to 103 (GLDR). Asp102 functions as the Proton acceptor in the catalytic mechanism. Asp122 lines the K(+) pocket. Residue Thr125 coordinates ATP. Residue Thr181 participates in substrate binding.

The protein belongs to the type III pantothenate kinase family. Homodimer. It depends on NH4(+) as a cofactor. Requires K(+) as cofactor.

Its subcellular location is the cytoplasm. The enzyme catalyses (R)-pantothenate + ATP = (R)-4'-phosphopantothenate + ADP + H(+). It functions in the pathway cofactor biosynthesis; coenzyme A biosynthesis; CoA from (R)-pantothenate: step 1/5. Its function is as follows. Catalyzes the phosphorylation of pantothenate (Pan), the first step in CoA biosynthesis. This is Type III pantothenate kinase from Pseudomonas savastanoi pv. phaseolicola (strain 1448A / Race 6) (Pseudomonas syringae pv. phaseolicola (strain 1448A / Race 6)).